The chain runs to 384 residues: Odorant receptor 46a, isoform B (384 aa).

At 1 to 37 the chain is on the cytoplasmic side; that stretch reads MVTEDFYKYQVWYFQILGVWQLPTWAADHQRRFQSMR. A helical membrane pass occupies residues 38-58; sequence FGFILVILFIMLLLFSFEMLN. N59 carries N-linked (GlcNAc...) asparagine glycosylation. Topologically, residues 59-65 are extracellular; it reads NISQVRE. The chain crosses the membrane as a helical span at residues 66–86; sequence ILKVFFMFATEISCMAKLLHL. Residues 87 to 130 lie on the Cytoplasmic side of the membrane; the sequence is KLKSRKLAGLVDAMLSPEFGVKSEQEMQMLELDRVAVVRMRNSY. A helical membrane pass occupies residues 131–151; sequence GIMSLGAASLILIVPCFDNFG. The Extracellular segment spans residues 152 to 165; the sequence is ELPLAMLEVCSIEG. The helical transmembrane segment at 166 to 186 threads the bilayer; the sequence is WICYWSQYLFHSICLLPTCVL. Topologically, residues 187-247 are cytoplasmic; it reads NITYDSVAYS…YNRIVRFKDL (61 aa). Residues 248-268 form a helical membrane-spanning segment; sequence VELFIKGPGSVQLMCSVLVLV. The Extracellular portion of the chain corresponds to 269-283; it reads SNLYDMSTMSIANGD. A helical transmembrane segment spans residues 284–304; that stretch reads AIFMLKTCIYQLVMLWQIFII. Residues 305 to 348 lie on the Cytoplasmic side of the membrane; the sequence is CYASNEVTVQSSRLCHSIYSSQWTGWNRANRRIVLLMMQRFNSP. Residues 349-369 form a helical membrane-spanning segment; that stretch reads MLLSTFNPTFAFSLEAFGSIV. N370 carries N-linked (GlcNAc...) asparagine glycosylation. Residues 370 to 384 lie on the Extracellular side of the membrane; the sequence is NCSYSYFALLKRVNS.

The protein belongs to the insect chemoreceptor superfamily. Heteromeric odorant receptor channel (TC 1.A.69) family. Or2a subfamily. As to quaternary structure, interacts with Orco. Complexes exist early in the endomembrane system in olfactory sensory neurons (OSNs), coupling these complexes to the conserved ciliary trafficking pathway. As to expression, isoform B is expressed in the antenna.

It localises to the cell membrane. Odorant receptor which mediates acceptance or avoidance behavior, depending on its substrates. The odorant receptor repertoire encodes a large collection of odor stimuli that vary widely in identity, intensity, and duration. May form a complex with Orco to form odorant-sensing units, providing sensitive and prolonged odorant signaling and calcium permeability. The protein is Odorant receptor 46a, isoform B (Or46a) of Drosophila melanogaster (Fruit fly).